A 261-amino-acid polypeptide reads, in one-letter code: Flagellar L-ring protein (261 aa).

An N-terminal signal peptide occupies residues 1 to 18 (MAAMKRLLASSLLILLSG). Residue cysteine 19 is the site of N-palmitoyl cysteine attachment. Cysteine 19 carries S-diacylglycerol cysteine lipidation. Positions 37-67 (TVDAVEGDKSESNSGLTDALRNRTDPVAGDP) are disordered.

The protein belongs to the FlgH family. In terms of assembly, the basal body constitutes a major portion of the flagellar organelle and consists of four rings (L,P,S, and M) mounted on a central rod.

The protein resides in the cell outer membrane. Its subcellular location is the bacterial flagellum basal body. Functionally, assembles around the rod to form the L-ring and probably protects the motor/basal body from shearing forces during rotation. The polypeptide is Flagellar L-ring protein (Vibrio cholerae serotype O1 (strain ATCC 39541 / Classical Ogawa 395 / O395)).